Consider the following 216-residue polypeptide: 4-hydroxy-tetrahydrodipicolinate reductase (216 aa).

NAD(+)-binding positions include 9-12, 71-73, and 95-98; these read SGRM, GTT, and AYNF. The active-site Proton donor/acceptor is the His-127. His-128 contributes to the (S)-2,3,4,5-tetrahydrodipicolinate binding site. Lys-131 serves as a coordination point for NAD(+). The active-site Proton donor is the Lys-131. Residue 137 to 138 coordinates (S)-2,3,4,5-tetrahydrodipicolinate; sequence GT.

It belongs to the DapB family. In terms of assembly, homotetramer.

Its subcellular location is the cytoplasm. It carries out the reaction (S)-2,3,4,5-tetrahydrodipicolinate + NAD(+) + H2O = (2S,4S)-4-hydroxy-2,3,4,5-tetrahydrodipicolinate + NADH + H(+). The catalysed reaction is (S)-2,3,4,5-tetrahydrodipicolinate + NADP(+) + H2O = (2S,4S)-4-hydroxy-2,3,4,5-tetrahydrodipicolinate + NADPH + H(+). It functions in the pathway amino-acid biosynthesis; L-lysine biosynthesis via DAP pathway; (S)-tetrahydrodipicolinate from L-aspartate: step 4/4. Is inhibited by high concentrations of NADH. Its function is as follows. Catalyzes the conversion of 4-hydroxy-tetrahydrodipicolinate (HTPA) to tetrahydrodipicolinate. Uses NADPH as a reductant with much more efficiency than NADH. In Thermotoga maritima (strain ATCC 43589 / DSM 3109 / JCM 10099 / NBRC 100826 / MSB8), this protein is 4-hydroxy-tetrahydrodipicolinate reductase.